The chain runs to 266 residues: MAMYMPSTASSTTHIRSPSGTPIDSPHEMTRSPSAEPSKPAKRKGTRSVSTLTPSQLARKRANDREAQRAIRARTKEHIERLEREVEELKSKQNRDETLQELIRKNKYLEKEIARLRETYGIPTPPTSHPYAPSIYDDSAVSSRTSSSFGQHSPDYHQVGEYGASYMTTPEPSEPWTSVLPCSNVSSPASSGSAEEYGYIPTSVPAGIEGLPPTSRVGACMKYEDMDNENGYPRSNGVPMPPTYMHQQQWPVPYSATVYYPQSPAL.

The segment at 1 to 73 is disordered; it reads MAMYMPSTAS…DREAQRAIRA (73 aa). 2 stretches are compositionally biased toward polar residues: residues 7-22 and 47-56; these read STAS…SGTP and RSVSTLTPSQ. In terms of domain architecture, bZIP spans 54–95; it reads PSQLARKRANDREAQRAIRARTKEHIERLEREVEELKSKQNR. Positions 59 to 81 are basic motif; that stretch reads RKRANDREAQRAIRARTKEHIER. Over residues 61–73 the composition is skewed to basic and acidic residues; sequence RANDREAQRAIRA. The tract at residues 82–89 is leucine-zipper; sequence LEREVEEL.

The protein belongs to the bZIP family. In terms of tissue distribution, expressed in appressoria.

The protein localises to the nucleus. Functionally, transcription factor that is required for infection of plants hosts. Is not implicated in the development of appressoria or the subsequent penetration of host leaves, but is necessary for the initial establishment of the fungus within plant cells by orchestrating the expression of a unique set of early invasion-related genes within appressoria, encoding secreted effectors, enzymes, secondary metabolism-related enzymes, and signaling membrane receptors. Controls the expression of targeted genes by interacting directly with a 5'-TGACTC-3' motif present in their promoters. The chain is Transcription factor BIP1 from Pyricularia oryzae (strain 70-15 / ATCC MYA-4617 / FGSC 8958) (Rice blast fungus).